A 178-amino-acid chain; its full sequence is Inner membrane-spanning protein YciB (178 aa).

6 helical membrane passes run 1 to 21, 23 to 43, 51 to 71, 77 to 97, 120 to 140, and 150 to 170; these read MKILFDFLPIVIFFVVYKMTG, IIIATAILIPATIIQVGFTWF, MHLVSLALVVLLGGATVLLGD, WKPTIVNGLFAIAFLGSQFIG, LNLAWVGFFIVSGVTNLYVAF, and FKLFGLLGMTIVFIILQGIYL.

Belongs to the YciB family.

The protein localises to the cell inner membrane. In terms of biological role, plays a role in cell envelope biogenesis, maintenance of cell envelope integrity and membrane homeostasis. The protein is Inner membrane-spanning protein YciB of Marinomonas sp. (strain MWYL1).